A 253-amino-acid chain; its full sequence is Geranylgeranylglyceryl phosphate synthase (253 aa).

Residues Asp-23 and Ser-52 each coordinate Mg(2+). Residues Tyr-171–Gly-177, Gly-202–Gly-203, and Gly-224–Thr-225 each bind sn-glycerol 1-phosphate.

This sequence belongs to the GGGP/HepGP synthase family. Group II subfamily. As to quaternary structure, homodimer. It depends on Mg(2+) as a cofactor.

It localises to the cytoplasm. It carries out the reaction sn-glycerol 1-phosphate + (2E,6E,10E)-geranylgeranyl diphosphate = sn-3-O-(geranylgeranyl)glycerol 1-phosphate + diphosphate. Its pathway is membrane lipid metabolism; glycerophospholipid metabolism. Its activity is regulated as follows. Inhibited by high concentrations of magnesium (&gt;10 mM) and by EDTA in vitro. In terms of biological role, prenyltransferase that catalyzes the transfer of the geranylgeranyl moiety of geranylgeranyl diphosphate (GGPP) to the C3 hydroxyl of sn-glycerol-1-phosphate (G1P). This reaction is the first ether-bond-formation step in the biosynthesis of archaeal membrane lipids. Cannot use sn-glycerol-3-phosphate (G3P) as substrate. This is Geranylgeranylglyceryl phosphate synthase from Thermoplasma acidophilum (strain ATCC 25905 / DSM 1728 / JCM 9062 / NBRC 15155 / AMRC-C165).